The chain runs to 257 residues: GTP cyclohydrolase FolE2 (257 aa).

It belongs to the GTP cyclohydrolase IV family.

The enzyme catalyses GTP + H2O = 7,8-dihydroneopterin 3'-triphosphate + formate + H(+). The protein operates within cofactor biosynthesis; 7,8-dihydroneopterin triphosphate biosynthesis; 7,8-dihydroneopterin triphosphate from GTP: step 1/1. Converts GTP to 7,8-dihydroneopterin triphosphate. This chain is GTP cyclohydrolase FolE2, found in Dictyoglomus turgidum (strain DSM 6724 / Z-1310).